A 194-amino-acid polypeptide reads, in one-letter code: Probable proteasome subunit beta type-4 (194 aa).

The protein belongs to the peptidase T1B family. The 26S proteasome consists of a 20S proteasome core and two 19S regulatory subunits. The 20S proteasome core is composed of 28 subunits that are arranged in four stacked rings, resulting in a barrel-shaped structure. The two end rings are each formed by seven alpha subunits, and the two central rings are each formed by seven beta subunits. The catalytic chamber with the active sites is on the inside of the barrel.

It localises to the cytoplasm. Its subcellular location is the nucleus. Functionally, non-catalytic component of the proteasome, a multicatalytic proteinase complex which is characterized by its ability to cleave peptides with Arg, Phe, Tyr, Leu, and Glu adjacent to the leaving group at neutral or slightly basic pH. The proteasome has an ATP-dependent proteolytic activity. This Schizosaccharomyces pombe (strain 972 / ATCC 24843) (Fission yeast) protein is Probable proteasome subunit beta type-4.